Reading from the N-terminus, the 191-residue chain is Guanylate kinase (191 aa).

Positions 10 to 188 (GQLIVLTGPS…ALHRLVKLIG (179 aa)) constitute a Guanylate kinase-like domain. ATP is bound at residue 17–24 (GPSGVGKG).

It belongs to the guanylate kinase family.

It is found in the cytoplasm. The enzyme catalyses GMP + ATP = GDP + ADP. Its function is as follows. Essential for recycling GMP and indirectly, cGMP. This is Guanylate kinase (gmk) from Synechocystis sp. (strain ATCC 27184 / PCC 6803 / Kazusa).